We begin with the raw amino-acid sequence, 776 residues long: DNA topoisomerase 1 (776 aa).

One can recognise a Toprim domain in the interval 1-111 (MKLVIVESPA…VESDDFFKRV (111 aa)). Residues Glu-7 and Asp-80 each contribute to the Mg(2+) site. The Topo IA-type catalytic domain maps to 132-568 (DTNLVNAQQA…FWRGFNHNIE (437 aa)). The segment at 166–171 (SAGRVQ) is interaction with DNA. Tyr-304 acts as the O-(5'-phospho-DNA)-tyrosine intermediate in catalysis. The segment at 600 to 627 (CPSCKTGQLSLKLGKFGAFLACSNYPEC) adopts a C4-type zinc-finger fold.

Belongs to the type IA topoisomerase family. As to quaternary structure, monomer. Mg(2+) serves as cofactor.

It catalyses the reaction ATP-independent breakage of single-stranded DNA, followed by passage and rejoining.. Functionally, releases the supercoiling and torsional tension of DNA, which is introduced during the DNA replication and transcription, by transiently cleaving and rejoining one strand of the DNA duplex. Introduces a single-strand break via transesterification at a target site in duplex DNA. The scissile phosphodiester is attacked by the catalytic tyrosine of the enzyme, resulting in the formation of a DNA-(5'-phosphotyrosyl)-enzyme intermediate and the expulsion of a 3'-OH DNA strand. The free DNA strand then undergoes passage around the unbroken strand, thus removing DNA supercoils. Finally, in the religation step, the DNA 3'-OH attacks the covalent intermediate to expel the active-site tyrosine and restore the DNA phosphodiester backbone. This Rickettsia prowazekii (strain Madrid E) protein is DNA topoisomerase 1.